The following is a 176-amino-acid chain: Oleosin Ara h 14.0101 (176 aa).

Ala-2 is modified (N-acetylalanine; alternate). Helical transmembrane passes span 50 to 80 (IIAV…GLAI) and 95 to 117 (AVVT…LTGL). A disordered region spans residues 157–176 (TKDAGQQIQTKAQDVKRSSS).

This sequence belongs to the oleosin family. Homodimer. Forms oligomers. Expressed in seeds (at protein level). Not expressed in leaves.

The protein localises to the lipid droplet. The protein resides in the membrane. May have a structural role to stabilize the lipid body during desiccation of the seed by preventing coalescence of the oil. Probably interacts with both lipid and phospholipid moieties of lipid bodies. May also provide recognition signals for specific lipase anchorage in lipolysis during seedling growth. The sequence is that of Oleosin Ara h 14.0101 from Arachis hypogaea (Peanut).